The chain runs to 121 residues: Inner membrane protein YhaH (121 aa).

Topologically, residues 1 to 23 (MDWYLKVLKNYVGFRGRARRKEY) are periplasmic. The helical transmembrane segment at 24 to 44 (WMFILVNIIFTFVLGLLDKML) threads the bilayer. The Cytoplasmic segment spans residues 45–49 (GWQRA). Residues 50 to 70 (GGEGILTTIYGILVFLPWWAV) traverse the membrane as a helical segment. At 71 to 80 (QFRRLHDTDR) the chain is on the periplasmic side. Residues 81–101 (SAWWALLFLIPFIGWLIIIVF) traverse the membrane as a helical segment. The Cytoplasmic segment spans residues 102 to 121 (NCQAGTPGENRFGPDPKLEP).

This sequence to E.coli YhaI.

It localises to the cell inner membrane. The polypeptide is Inner membrane protein YhaH (yhaH) (Escherichia coli O157:H7).